Reading from the N-terminus, the 906-residue chain is Inactive angiotensin-converting enzyme-related protein (906 aa).

The signal sequence occupies residues 1 to 19; that stretch reads MKFHILLLLLVGACLPVFT. The tract at residues 28 to 95 is disordered; sequence LLPADEAPKD…SPTPEPEPAI (68 aa). Residues 67–83 are compositionally biased toward basic and acidic residues; the sequence is PEPKPEPEPEPEPKPEP. The N-linked (GlcNAc...) asparagine glycan is linked to Asn-159. One can recognise a Peptidase M2 domain in the interval 175–765; that stretch reads IKDEEKLRSW…EIDQVVVGWD (591 aa). An intrachain disulfide couples Cys-289 to Cys-297. Residue Asn-653 is glycosylated (N-linked (GlcNAc...) asparagine). The disordered stretch occupies residues 862 to 882; the sequence is VTTPEPSAEPEPTAKTTTKMP. The segment covering 863-882 has biased composition (low complexity); the sequence is TTPEPSAEPEPTAKTTTKMP.

This sequence belongs to the peptidase M2 family. As to expression, expressed in the hypodermis, in the vulva during organogenesis, and in the ray papillae of the male tail.

In terms of biological role, inactive as a metallopeptidase, due to a lack of active site residues. Required for larval molting, male tail development, and formation of adult alae. Acts in the heterochronic pathway and plays a role in the developmental timing of postembryonic hypodermal seam cell division and adult alae production. Acts synergistically with apl-1 in let-7 regulated postembryonic cell division events. Might act downstream of the heterochronic protein lin-41. Negative regulator of lifespan, heat and oxidative stress response and age-related degenerative changes like reduced pharyngeal pumping and decreased body movements. Lifespan restriction is dependent on the forkhead-type transcription factor daf-16. The sequence is that of Inactive angiotensin-converting enzyme-related protein from Caenorhabditis elegans.